The chain runs to 215 residues: MASETEKTHALLQSCSTESLLSSLGLGLFCTVADRLLQFPIIQQNAWLRALSDNSVHCVIGMWSWAIVIGIRKKTDFGEIILAGFLASVIDIDHFLLSGSLSLKAALSLPRRPFLHCSTVIPTVVLTLKFTMHFFKLKDSWCFLPWMLFISWTSHHIRDGIRHGLWMCPFGKTSPLPFWLYVIITSSLPHICSFVMYFTGTRQMMSSKHGIHIDV.

Helical transmembrane passes span 77-97 (FGEIILAGFLASVIDIDHFLL), 114-134 (FLHCSTVIPTVVLTLKFTMHF), and 178-198 (FWLYVIITSSLPHICSFVMYF).

The protein resides in the membrane. This Bos taurus (Bovine) protein is Transmembrane protein 267 (TMEM267).